The primary structure comprises 598 residues: Probable translation initiation factor IF-2 (598 aa).

The 223-residue stretch at 3–225 (LRCPIVSVLG…GLAQKFLEQK (223 aa)) folds into the tr-type G domain. A G1 region spans residues 12 to 19 (GHVDHGKT). 12–19 (GHVDHGKT) contacts GTP. The tract at residues 37–41 (GITQH) is G2. Residues 76 to 79 (DTPG) are G3. GTP-binding positions include 76–80 (DTPGH) and 130–133 (NKVD). A G4 region spans residues 130-133 (NKVD). Positions 200–202 (SAM) are G5.

It belongs to the TRAFAC class translation factor GTPase superfamily. Classic translation factor GTPase family. IF-2 subfamily.

Function in general translation initiation by promoting the binding of the formylmethionine-tRNA to ribosomes. Seems to function along with eIF-2. The chain is Probable translation initiation factor IF-2 from Methanococcus maripaludis (strain C5 / ATCC BAA-1333).